We begin with the raw amino-acid sequence, 129 residues long: Large ribosomal subunit protein bL19 (129 aa).

The protein belongs to the bacterial ribosomal protein bL19 family.

Its function is as follows. This protein is located at the 30S-50S ribosomal subunit interface and may play a role in the structure and function of the aminoacyl-tRNA binding site. In Rhizorhabdus wittichii (strain DSM 6014 / CCUG 31198 / JCM 15750 / NBRC 105917 / EY 4224 / RW1) (Sphingomonas wittichii), this protein is Large ribosomal subunit protein bL19.